A 191-amino-acid polypeptide reads, in one-letter code: Signal peptidase complex catalytic subunit sec11 (191 aa).

Residues 1–18 (MLSFLSSNLSNVRQSLAQ) are Cytoplasmic-facing. A helical; Signal-anchor for type II membrane protein membrane pass occupies residues 19–39 (VLNFALVLSTAFMMWKGLSVF). Residues 40–191 (TASSSPVVVV…MGLMVMLQRE (152 aa)) are Lumenal-facing. Active-site charge relay system residues include serine 53, histidine 92, and aspartate 133. The interval 177–188 (ALLGIMGLMVML) is C-terminal short (CTS) helix.

It belongs to the peptidase S26B family. In terms of assembly, component of the signal peptidase complex (SPC) composed of a catalytic subunit SEC11 and three accessory subunits SPC1, SPC2 and SPC3. The complex induces a local thinning of the ER membrane which is used to measure the length of the signal peptide (SP) h-region of protein substrates. This ensures the selectivity of the complex towards h-regions shorter than 18-20 amino acids. SPC associates with the translocon complex.

Its subcellular location is the endoplasmic reticulum membrane. It catalyses the reaction Cleavage of hydrophobic, N-terminal signal or leader sequences from secreted and periplasmic proteins.. Functionally, catalytic component of the signal peptidase complex (SPC) which catalyzes the cleavage of N-terminal signal sequences from nascent proteins as they are translocated into the lumen of the endoplasmic reticulum. Specifically cleaves N-terminal signal peptides that contain a hydrophobic alpha-helix (h-region) shorter than 18-20 amino acids. In Aspergillus oryzae (strain ATCC 42149 / RIB 40) (Yellow koji mold), this protein is Signal peptidase complex catalytic subunit sec11 (sec11).